The primary structure comprises 151 residues: Transcription elongation factor GreA (151 aa).

Residues 41-62 (AEYHAAREKQSFIEGRIKELEA) are a coiled coil.

Belongs to the GreA/GreB family.

Functionally, necessary for efficient RNA polymerase transcription elongation past template-encoded arresting sites. The arresting sites in DNA have the property of trapping a certain fraction of elongating RNA polymerases that pass through, resulting in locked ternary complexes. Cleavage of the nascent transcript by cleavage factors such as GreA or GreB allows the resumption of elongation from the new 3'terminus. GreA releases sequences of 2 to 3 nucleotides. The polypeptide is Transcription elongation factor GreA (Cereibacter sphaeroides (strain ATCC 17023 / DSM 158 / JCM 6121 / CCUG 31486 / LMG 2827 / NBRC 12203 / NCIMB 8253 / ATH 2.4.1.) (Rhodobacter sphaeroides)).